The sequence spans 437 residues: Adenylyltransferase and sulfurtransferase MOCS3 (437 aa).

Residues Gly82, Asp103, 110-114, Lys127, and 171-172 contribute to the ATP site; these read TNLHR and DN. Cys212 and Cys215 together coordinate Zn(2+). The active-site Glycyl thioester intermediate; for adenylyltransferase activity is the Cys229. Residues Cys287 and Cys290 each contribute to the Zn(2+) site. Residues 337-435 enclose the Rhodanese domain; that stretch reads SNVPHLLVDV…WTHNIDPEFP (99 aa). Cys391 serves as the catalytic Cysteine persulfide intermediate; for sulfurtransferase activity.

This sequence in the N-terminal section; belongs to the HesA/MoeB/ThiF family. UBA4 subfamily. Requires Zn(2+) as cofactor.

It is found in the cytoplasm. It localises to the cytosol. It carries out the reaction [molybdopterin-synthase sulfur-carrier protein]-C-terminal Gly-Gly + ATP + H(+) = [molybdopterin-synthase sulfur-carrier protein]-C-terminal Gly-Gly-AMP + diphosphate. The enzyme catalyses [molybdopterin-synthase sulfur-carrier protein]-C-terminal Gly-Gly-AMP + S-sulfanyl-L-cysteinyl-[cysteine desulfurase] + AH2 = [molybdopterin-synthase sulfur-carrier protein]-C-terminal-Gly-aminoethanethioate + L-cysteinyl-[cysteine desulfurase] + A + AMP + 2 H(+). It participates in tRNA modification; 5-methoxycarbonylmethyl-2-thiouridine-tRNA biosynthesis. The protein operates within cofactor biosynthesis; molybdopterin biosynthesis. Plays a central role in 2-thiolation of mcm(5)S(2)U at tRNA wobble positions of cytosolic tRNA(Lys), tRNA(Glu) and tRNA(Gln). Also essential during biosynthesis of the molybdenum cofactor. Acts by mediating the C-terminal thiocarboxylation of sulfur carriers URM1 and MOCS2A. Its N-terminus first activates URM1 and MOCS2A as acyl-adenylates (-COAMP), then the persulfide sulfur on the catalytic cysteine is transferred to URM1 and MOCS2A to form thiocarboxylation (-COSH) of their C-terminus. The reaction probably involves hydrogen sulfide that is generated from the persulfide intermediate and that acts as a nucleophile towards URM1 and MOCS2A. Subsequently, a transient disulfide bond is formed. Does not use thiosulfate as sulfur donor; NFS1 probably acting as a sulfur donor for thiocarboxylation reactions. The protein is Adenylyltransferase and sulfurtransferase MOCS3 of Aedes aegypti (Yellowfever mosquito).